We begin with the raw amino-acid sequence, 207 residues long: UPF0328 protein ECU02_1590/ECU04_0060/ECU08_2120 (207 aa).

2 disordered regions span residues 1–154 (MPRP…HSHT) and 180–207 (GRLH…LATL). Composition is skewed to basic and acidic residues over residues 14-24 (DHPDFRSESSA) and 75-97 (HTEG…ETES). Composition is skewed to polar residues over residues 98 to 121 (PKPQ…SQNT) and 133 to 149 (SRPS…QSPH).

Belongs to the UPF0328 family.

The protein is UPF0328 protein ECU02_1590/ECU04_0060/ECU08_2120 of Encephalitozoon cuniculi (strain GB-M1) (Microsporidian parasite).